A 259-amino-acid polypeptide reads, in one-letter code: Global transcriptional regulator CodY (259 aa).

The segment at 1–155 (MDLLTRTRKI…GATVVGMEIL (155 aa)) is GAF domain. A DNA-binding region (H-T-H motif) is located at residues 203–222 (ASKIADRVGITRSVIVNALR). At S215 the chain carries Phosphoserine.

Belongs to the CodY family.

The protein localises to the cytoplasm. Its function is as follows. DNA-binding global transcriptional regulator which is involved in the adaptive response to starvation and acts by directly or indirectly controlling the expression of numerous genes in response to nutrient availability. During rapid exponential growth, CodY is highly active and represses genes whose products allow adaptation to nutrient depletion. This chain is Global transcriptional regulator CodY, found in Shouchella clausii (strain KSM-K16) (Alkalihalobacillus clausii).